The following is a 752-amino-acid chain: Ribonucleases P/MRP protein subunit popl-1 (752 aa).

The disordered stretch occupies residues 638-663; it reads KTTKRKRVNRKKRESKKRRKIEQEKR. The span at 640–657 shows a compositional bias: basic residues; it reads TKRKRVNRKKRESKKRRK.

Component of nuclear RNase P and RNase MRP ribonucleoproteins. Several subunits of RNase P are also part of the RNase MRP complex.

It is found in the nucleus. The protein resides in the nucleolus. It catalyses the reaction Endonucleolytic cleavage of RNA, removing 5'-extranucleotides from tRNA precursor.. Functionally, component of ribonuclease P, a ribonucleoprotein complex that generates mature tRNA molecules by cleaving their 5'-ends. Also a component of the MRP ribonuclease complex, which cleaves pre-rRNA sequences. This is Ribonucleases P/MRP protein subunit popl-1 from Caenorhabditis elegans.